A 289-amino-acid chain; its full sequence is tRNA pseudouridine synthase B (289 aa).

D38 serves as the catalytic Nucleophile.

It belongs to the pseudouridine synthase TruB family. Type 1 subfamily.

The enzyme catalyses uridine(55) in tRNA = pseudouridine(55) in tRNA. In terms of biological role, responsible for synthesis of pseudouridine from uracil-55 in the psi GC loop of transfer RNAs. The sequence is that of tRNA pseudouridine synthase B from Clostridium kluyveri (strain ATCC 8527 / DSM 555 / NBRC 12016 / NCIMB 10680 / K1).